Here is a 359-residue protein sequence, read N- to C-terminus: MEIKVLECLKRLEEVEKQISDPNIFSNPKEYSSLSKEHARLSEIKNAHESLVATKKILQDDKLALSTEKDPEIVAMLEEGVLVGEEAVERLSKQLENLLIPPDPDDDLSVIMELRAGTGGDEAALFVGDCVRMYHLYAASKGWQCEVLSASESDLGGYKEYVMGISGASVKRFLQYEAGTHRVQRVPETETQGRVHTSAVTVAVLPEPAEDDEEVFIDEKDLRIDTFRSSGAGGQHVNVTDSAVRITHIPSGVVVTCQDERSQHKNKAKAMRVLKARIRDAEVQKRAQEASAMRSAQVGSGDRSERIRTYNFPQNRVTDHRIGLTLYNLDRVMEGELDMITTALVTHVHRQLFGHEETA.

Position 235 is an N5-methylglutamine (Gln235). The disordered stretch occupies residues 287–312 (AQEASAMRSAQVGSGDRSERIRTYNF).

The protein belongs to the prokaryotic/mitochondrial release factor family. Methylated by PrmC. Methylation increases the termination efficiency of RF1.

Its subcellular location is the cytoplasm. In terms of biological role, peptide chain release factor 1 directs the termination of translation in response to the peptide chain termination codons UAG and UAA. This is Peptide chain release factor 1 from Chlamydia trachomatis serovar L2 (strain ATCC VR-902B / DSM 19102 / 434/Bu).